Consider the following 365-residue polypeptide: 3-isopropylmalate dehydrogenase (365 aa).

An NAD(+)-binding site is contributed by 78–91 (GPKWDTLPAEERPE). Substrate contacts are provided by R99, R109, R138, and D227. 3 residues coordinate Mg(2+): D227, D251, and D255. 285–297 (GSAPDIAGKNIAN) contributes to the NAD(+) binding site.

This sequence belongs to the isocitrate and isopropylmalate dehydrogenases family. LeuB type 1 subfamily. Homodimer. Requires Mg(2+) as cofactor. It depends on Mn(2+) as a cofactor.

Its subcellular location is the cytoplasm. It catalyses the reaction (2R,3S)-3-isopropylmalate + NAD(+) = 4-methyl-2-oxopentanoate + CO2 + NADH. The protein operates within amino-acid biosynthesis; L-leucine biosynthesis; L-leucine from 3-methyl-2-oxobutanoate: step 3/4. Catalyzes the oxidation of 3-carboxy-2-hydroxy-4-methylpentanoate (3-isopropylmalate) to 3-carboxy-4-methyl-2-oxopentanoate. The product decarboxylates to 4-methyl-2 oxopentanoate. This Syntrophotalea carbinolica (strain DSM 2380 / NBRC 103641 / GraBd1) (Pelobacter carbinolicus) protein is 3-isopropylmalate dehydrogenase.